The primary structure comprises 447 residues: MREIVHLQTGQCGNQIGAAFWQTISGEHGLDASGVYNGTSELQLERMNVYFNEASGNKYVPRAVLVDLEPGTMDAVRAGPFGQLFRPDNFVFGQSGAGNNWAKGHYTEGAELVDQVLDVVRREAEGCDCLQGFQITHSLGGGTGAGMGTLLISKIREEFPDRMMATFSVVPSPKVSDTVVEPYNATLSVHQLVENSDETFCIDNEALYDICMRTLKLSNPSYGDLNHLVSAVMSGVTVSLRFPGQLNSDLRKLAVNMVPFPRLHFFMVGFAPLTSRGAHHFRAVSVPELTQQMFDPKNMMAASDFRNGRYLTCSAIFRGKVSMKEVEDQMRNVQNKNSSYFVEWIPNNVQTALCSIPPRGLKMSSTFVGNSTAIQELFKRIGEQFTAMFRRKAFLHWYTGEGMDEMEFTEAESNMNDLVSEYQQYQDAGVDEEEEEYEEEAPLEGEE.

GTP is bound by residues Gln11, Glu69, Ser138, Gly142, Thr143, Gly144, Asn204, and Asn226. Glu69 lines the Mg(2+) pocket. A disordered region spans residues 424–447 (QYQDAGVDEEEEEYEEEAPLEGEE). The segment covering 429–447 (GVDEEEEEYEEEAPLEGEE) has biased composition (acidic residues).

Belongs to the tubulin family. In terms of assembly, dimer of alpha and beta chains. A typical microtubule is a hollow water-filled tube with an outer diameter of 25 nm and an inner diameter of 15 nM. Alpha-beta heterodimers associate head-to-tail to form protofilaments running lengthwise along the microtubule wall with the beta-tubulin subunit facing the microtubule plus end conferring a structural polarity. Microtubules usually have 13 protofilaments but different protofilament numbers can be found in some organisms and specialized cells. It depends on Mg(2+) as a cofactor.

It is found in the cytoplasm. The protein resides in the cytoskeleton. Functionally, tubulin is the major constituent of microtubules, a cylinder consisting of laterally associated linear protofilaments composed of alpha- and beta-tubulin heterodimers. Microtubules grow by the addition of GTP-tubulin dimers to the microtubule end, where a stabilizing cap forms. Below the cap, tubulin dimers are in GDP-bound state, owing to GTPase activity of alpha-tubulin. The chain is Tubulin beta chain (tub-2) from Neurospora crassa (strain ATCC 24698 / 74-OR23-1A / CBS 708.71 / DSM 1257 / FGSC 987).